The following is a 329-amino-acid chain: NAC domain-containing protein 79 (329 aa).

Residues 17-167 (LPPGFRFHPT…EWVICRVFHK (151 aa)) enclose the NAC domain. Residues 114–173 (VGMKKTLVFYRGRAPKGQKTNWVMHEYRLDGKLSAHNLPKTAKNEWVICRVFHKTAGGKK) mediate DNA binding.

In terms of tissue distribution, expressed at low levels in leaves.

It is found in the nucleus. The protein is NAC domain-containing protein 79 of Arabidopsis thaliana (Mouse-ear cress).